The chain runs to 593 residues: Chaperone protein DnaK (593 aa).

A Phosphothreonine; by autocatalysis modification is found at Thr181.

The protein belongs to the heat shock protein 70 family.

Its function is as follows. Acts as a chaperone. The chain is Chaperone protein DnaK from Mycoplasmoides gallisepticum (strain R(low / passage 15 / clone 2)) (Mycoplasma gallisepticum).